The primary structure comprises 270 residues: Release factor glutamine methyltransferase (270 aa).

Residues 113-117 (GTGSG), Asp136, and Asn177 contribute to the S-adenosyl-L-methionine site. Residue 177–180 (NPPY) coordinates substrate.

Belongs to the protein N5-glutamine methyltransferase family. PrmC subfamily.

The enzyme catalyses L-glutaminyl-[peptide chain release factor] + S-adenosyl-L-methionine = N(5)-methyl-L-glutaminyl-[peptide chain release factor] + S-adenosyl-L-homocysteine + H(+). Its function is as follows. Methylates the class 1 translation termination release factors RF1/PrfA and RF2/PrfB on the glutamine residue of the universally conserved GGQ motif. The sequence is that of Release factor glutamine methyltransferase from Lactococcus lactis subsp. lactis (strain IL1403) (Streptococcus lactis).